The primary structure comprises 336 residues: Dihydroorotate dehydrogenase (quinone) (336 aa).

FMN contacts are provided by residues alanine 62 to lysine 66 and threonine 86. Lysine 66 serves as a coordination point for substrate. Substrate is bound at residue asparagine 111–phenylalanine 115. Residues asparagine 139 and asparagine 172 each contribute to the FMN site. Asparagine 172 serves as a coordination point for substrate. Catalysis depends on serine 175, which acts as the Nucleophile. Asparagine 177 is a substrate binding site. Positions 217 and 245 each coordinate FMN. Asparagine 246–threonine 247 contributes to the substrate binding site. Residues glycine 268, glycine 297, and tyrosine 318–serine 319 contribute to the FMN site.

This sequence belongs to the dihydroorotate dehydrogenase family. Type 2 subfamily. Monomer. FMN is required as a cofactor.

It localises to the cell membrane. The catalysed reaction is (S)-dihydroorotate + a quinone = orotate + a quinol. It functions in the pathway pyrimidine metabolism; UMP biosynthesis via de novo pathway; orotate from (S)-dihydroorotate (quinone route): step 1/1. Its function is as follows. Catalyzes the conversion of dihydroorotate to orotate with quinone as electron acceptor. In Psychromonas ingrahamii (strain DSM 17664 / CCUG 51855 / 37), this protein is Dihydroorotate dehydrogenase (quinone).